Consider the following 337-residue polypeptide: Heat-inducible transcription repressor HrcA (337 aa).

The protein belongs to the HrcA family.

Functionally, negative regulator of class I heat shock genes (grpE-dnaK-dnaJ and groELS operons). Prevents heat-shock induction of these operons. This Kocuria rhizophila (strain ATCC 9341 / DSM 348 / NBRC 103217 / DC2201) protein is Heat-inducible transcription repressor HrcA.